The chain runs to 217 residues: Thiamine-phosphate synthase (217 aa).

Residues 38–42 (QYRDK) and Asn-70 contribute to the 4-amino-2-methyl-5-(diphosphooxymethyl)pyrimidine site. Residues Asp-71 and Asp-90 each contribute to the Mg(2+) site. Residue Ser-109 coordinates 4-amino-2-methyl-5-(diphosphooxymethyl)pyrimidine. 136 to 138 (SIT) is a binding site for 2-[(2R,5Z)-2-carboxy-4-methylthiazol-5(2H)-ylidene]ethyl phosphate. Lys-139 contacts 4-amino-2-methyl-5-(diphosphooxymethyl)pyrimidine. Residue Gly-166 coordinates 2-[(2R,5Z)-2-carboxy-4-methylthiazol-5(2H)-ylidene]ethyl phosphate.

The protein belongs to the thiamine-phosphate synthase family. Mg(2+) is required as a cofactor.

The catalysed reaction is 2-[(2R,5Z)-2-carboxy-4-methylthiazol-5(2H)-ylidene]ethyl phosphate + 4-amino-2-methyl-5-(diphosphooxymethyl)pyrimidine + 2 H(+) = thiamine phosphate + CO2 + diphosphate. It catalyses the reaction 2-(2-carboxy-4-methylthiazol-5-yl)ethyl phosphate + 4-amino-2-methyl-5-(diphosphooxymethyl)pyrimidine + 2 H(+) = thiamine phosphate + CO2 + diphosphate. It carries out the reaction 4-methyl-5-(2-phosphooxyethyl)-thiazole + 4-amino-2-methyl-5-(diphosphooxymethyl)pyrimidine + H(+) = thiamine phosphate + diphosphate. Its pathway is cofactor biosynthesis; thiamine diphosphate biosynthesis; thiamine phosphate from 4-amino-2-methyl-5-diphosphomethylpyrimidine and 4-methyl-5-(2-phosphoethyl)-thiazole: step 1/1. Its function is as follows. Condenses 4-methyl-5-(beta-hydroxyethyl)thiazole monophosphate (THZ-P) and 2-methyl-4-amino-5-hydroxymethyl pyrimidine pyrophosphate (HMP-PP) to form thiamine monophosphate (TMP). The polypeptide is Thiamine-phosphate synthase (Nitrosococcus oceani (strain ATCC 19707 / BCRC 17464 / JCM 30415 / NCIMB 11848 / C-107)).